Reading from the N-terminus, the 218-residue chain is Small ribosomal subunit protein uS5 (218 aa).

The interval 1–49 is disordered; sequence MPGRQRRDGGSGPAGQNGPNTGDNRGGGDRRGGGRDDRRGGQSAEKSNH. Positions 26-49 are enriched in basic and acidic residues; it reads GGGDRRGGGRDDRRGGQSAEKSNH. The S5 DRBM domain maps to 49–112; the sequence is HIERVVTINR…EEARKSFFRV (64 aa).

Belongs to the universal ribosomal protein uS5 family. Part of the 30S ribosomal subunit. Contacts proteins S4 and S8.

With S4 and S12 plays an important role in translational accuracy. In terms of biological role, located at the back of the 30S subunit body where it stabilizes the conformation of the head with respect to the body. This is Small ribosomal subunit protein uS5 from Rhodococcus jostii (strain RHA1).